Here is a 366-residue protein sequence, read N- to C-terminus: Spermidine/putrescine import ATP-binding protein PotA (366 aa).

Residues 8–239 (IRFENVTKQF…PINKFVADFI (232 aa)) enclose the ABC transporter domain. 41–48 (GPSGCGKT) is a binding site for ATP.

This sequence belongs to the ABC transporter superfamily. Spermidine/putrescine importer (TC 3.A.1.11.1) family. In terms of assembly, the complex is composed of two ATP-binding proteins (PotA), two transmembrane proteins (PotB and PotC) and a solute-binding protein (PotD).

The protein localises to the cell membrane. It catalyses the reaction ATP + H2O + polyamine-[polyamine-binding protein]Side 1 = ADP + phosphate + polyamineSide 2 + [polyamine-binding protein]Side 1.. Functionally, part of the ABC transporter complex PotABCD involved in spermidine/putrescine import. Responsible for energy coupling to the transport system. The protein is Spermidine/putrescine import ATP-binding protein PotA of Listeria monocytogenes serovar 1/2a (strain ATCC BAA-679 / EGD-e).